The chain runs to 258 residues: Phosphoribosylaminoimidazole-succinocarboxamide synthase (258 aa).

It belongs to the SAICAR synthetase family.

It catalyses the reaction 5-amino-1-(5-phospho-D-ribosyl)imidazole-4-carboxylate + L-aspartate + ATP = (2S)-2-[5-amino-1-(5-phospho-beta-D-ribosyl)imidazole-4-carboxamido]succinate + ADP + phosphate + 2 H(+). Its pathway is purine metabolism; IMP biosynthesis via de novo pathway; 5-amino-1-(5-phospho-D-ribosyl)imidazole-4-carboxamide from 5-amino-1-(5-phospho-D-ribosyl)imidazole-4-carboxylate: step 1/2. The chain is Phosphoribosylaminoimidazole-succinocarboxamide synthase from Rhizorhabdus wittichii (strain DSM 6014 / CCUG 31198 / JCM 15750 / NBRC 105917 / EY 4224 / RW1) (Sphingomonas wittichii).